A 186-amino-acid chain; its full sequence is Peptide deformylase (186 aa).

Fe cation contacts are provided by Cys113 and His157. Glu158 is an active-site residue. His161 serves as a coordination point for Fe cation.

It belongs to the polypeptide deformylase family. Fe(2+) is required as a cofactor.

The catalysed reaction is N-terminal N-formyl-L-methionyl-[peptide] + H2O = N-terminal L-methionyl-[peptide] + formate. Its function is as follows. Removes the formyl group from the N-terminal Met of newly synthesized proteins. Requires at least a dipeptide for an efficient rate of reaction. N-terminal L-methionine is a prerequisite for activity but the enzyme has broad specificity at other positions. The protein is Peptide deformylase of Malacoplasma penetrans (strain HF-2) (Mycoplasma penetrans).